The sequence spans 705 residues: Fatty acid oxidation complex subunit alpha (705 aa).

The segment at Met1 to Pro188 is enoyl-CoA hydratase. Positions Arg308–Phe705 are 3-hydroxyacyl-CoA dehydrogenase.

The protein in the N-terminal section; belongs to the enoyl-CoA hydratase/isomerase family. It in the central section; belongs to the 3-hydroxyacyl-CoA dehydrogenase family. As to quaternary structure, heterotetramer of two alpha chains (FadJ) and two beta chains (FadI).

The protein localises to the cytoplasm. The enzyme catalyses a (3S)-3-hydroxyacyl-CoA = a (2E)-enoyl-CoA + H2O. It carries out the reaction a 4-saturated-(3S)-3-hydroxyacyl-CoA = a (3E)-enoyl-CoA + H2O. It catalyses the reaction a (3S)-3-hydroxyacyl-CoA + NAD(+) = a 3-oxoacyl-CoA + NADH + H(+). The catalysed reaction is (3S)-3-hydroxybutanoyl-CoA = (3R)-3-hydroxybutanoyl-CoA. The protein operates within lipid metabolism; fatty acid beta-oxidation. Functionally, catalyzes the formation of a hydroxyacyl-CoA by addition of water on enoyl-CoA. Also exhibits 3-hydroxyacyl-CoA epimerase and 3-hydroxyacyl-CoA dehydrogenase activities. The polypeptide is Fatty acid oxidation complex subunit alpha (Shewanella oneidensis (strain ATCC 700550 / JCM 31522 / CIP 106686 / LMG 19005 / NCIMB 14063 / MR-1)).